A 178-amino-acid polypeptide reads, in one-letter code: ATP synthase subunit delta (178 aa).

Belongs to the ATPase delta chain family. As to quaternary structure, F-type ATPases have 2 components, F(1) - the catalytic core - and F(0) - the membrane proton channel. F(1) has five subunits: alpha(3), beta(3), gamma(1), delta(1), epsilon(1). F(0) has three main subunits: a(1), b(2) and c(10-14). The alpha and beta chains form an alternating ring which encloses part of the gamma chain. F(1) is attached to F(0) by a central stalk formed by the gamma and epsilon chains, while a peripheral stalk is formed by the delta and b chains.

Its subcellular location is the cell inner membrane. Its function is as follows. F(1)F(0) ATP synthase produces ATP from ADP in the presence of a proton or sodium gradient. F-type ATPases consist of two structural domains, F(1) containing the extramembraneous catalytic core and F(0) containing the membrane proton channel, linked together by a central stalk and a peripheral stalk. During catalysis, ATP synthesis in the catalytic domain of F(1) is coupled via a rotary mechanism of the central stalk subunits to proton translocation. This protein is part of the stalk that links CF(0) to CF(1). It either transmits conformational changes from CF(0) to CF(1) or is implicated in proton conduction. This is ATP synthase subunit delta from Methylobacillus flagellatus (strain ATCC 51484 / DSM 6875 / VKM B-1610 / KT).